The chain runs to 365 residues: Aminomethyltransferase (365 aa).

It belongs to the GcvT family. As to quaternary structure, the glycine cleavage system is composed of four proteins: P, T, L and H.

It catalyses the reaction N(6)-[(R)-S(8)-aminomethyldihydrolipoyl]-L-lysyl-[protein] + (6S)-5,6,7,8-tetrahydrofolate = N(6)-[(R)-dihydrolipoyl]-L-lysyl-[protein] + (6R)-5,10-methylene-5,6,7,8-tetrahydrofolate + NH4(+). The glycine cleavage system catalyzes the degradation of glycine. This is Aminomethyltransferase from Aeromonas salmonicida (strain A449).